The primary structure comprises 680 residues: UvrABC system protein B (680 aa).

Residues 27–422 enclose the Helicase ATP-binding domain; sequence AGALGGVTFQ…GRMAGEHVAE (396 aa). 40 to 47 is a binding site for ATP; sequence GATGTGKT. The Beta-hairpin signature appears at 93-116; sequence YYDYYQPEAYIPQTDTYIEKSASI. In terms of domain architecture, Helicase C-terminal spans 443–609; sequence QVDDLLHEIH…PIVKRLDANS (167 aa). Residues 641-676 form the UVR domain; sequence PELVSQLEIQMRDAAKKLEFEKAAEYRDKIHKLRER.

The protein belongs to the UvrB family. As to quaternary structure, forms a heterotetramer with UvrA during the search for lesions. Interacts with UvrC in an incision complex.

The protein resides in the cytoplasm. Functionally, the UvrABC repair system catalyzes the recognition and processing of DNA lesions. A damage recognition complex composed of 2 UvrA and 2 UvrB subunits scans DNA for abnormalities. Upon binding of the UvrA(2)B(2) complex to a putative damaged site, the DNA wraps around one UvrB monomer. DNA wrap is dependent on ATP binding by UvrB and probably causes local melting of the DNA helix, facilitating insertion of UvrB beta-hairpin between the DNA strands. Then UvrB probes one DNA strand for the presence of a lesion. If a lesion is found the UvrA subunits dissociate and the UvrB-DNA preincision complex is formed. This complex is subsequently bound by UvrC and the second UvrB is released. If no lesion is found, the DNA wraps around the other UvrB subunit that will check the other stand for damage. In Gloeobacter violaceus (strain ATCC 29082 / PCC 7421), this protein is UvrABC system protein B.